The primary structure comprises 443 residues: DNA double-strand break repair protein Mre11 (443 aa).

Residues Asp-8, His-10, Asp-49, and Asn-84 each contribute to the Mn(2+) site. His-85 functions as the Proton donor in the catalytic mechanism. The Mn(2+) site is built by His-169, His-201, and His-203. The tract at residues 382-429 (QEEGAEERVVEEETEKKVEEQFKGDEEADEAERRAEETEKAKSTKKAR) is disordered. Over residues 395-423 (TEKKVEEQFKGDEEADEAERRAEETEKAK) the composition is skewed to basic and acidic residues.

Belongs to the MRE11/RAD32 family. As to quaternary structure, homodimer. Forms a heterotetramer composed of two Mre11 subunits and two Rad50 subunits. It depends on Mn(2+) as a cofactor.

Nuclease activity is regulated by Rad50. In terms of biological role, part of the Rad50/Mre11 complex, which is involved in the early steps of DNA double-strand break (DSB) repair. The complex may facilitate opening of the processed DNA ends to aid in the recruitment of HerA and NurA. Mre11 binds to DSB ends and has both double-stranded 3'-5' exonuclease activity and single-stranded endonuclease activity. The chain is DNA double-strand break repair protein Mre11 from Archaeoglobus fulgidus (strain ATCC 49558 / DSM 4304 / JCM 9628 / NBRC 100126 / VC-16).